Consider the following 495-residue polypeptide: Alpha-1B-glycoprotein (495 aa).

The first 21 residues, 1–21, serve as a signal peptide directing secretion; the sequence is MSMLVVFLLLWGVTWGPVTEA. Ig-like V-type domains follow at residues 22-113, 114-206, 207-299, 300-397, and 398-495; these read AIFY…LTGP, KSLP…ELAA, PPPP…PVEL, ILSD…LHVD, and GPPP…VAES. Asparagine 44 carries an N-linked (GlcNAc...) (complex) asparagine glycan. Intrachain disulfides connect cysteine 49–cysteine 93, cysteine 139–cysteine 182, cysteine 232–cysteine 279, cysteine 325–cysteine 374, and cysteine 423–cysteine 470. N-linked (GlcNAc...) asparagine glycosylation is present at asparagine 179. N-linked (GlcNAc...) asparagine glycosylation is found at asparagine 363 and asparagine 371.

Interacts with CRISP3. As to expression, plasma.

The protein localises to the secreted. The chain is Alpha-1B-glycoprotein (A1BG) from Homo sapiens (Human).